Reading from the N-terminus, the 56-residue chain is Alpha-conotoxin TxIA (56 aa).

Positions 1-16 (MFTVFLLVVLATAVVS) are cleaved as a signal peptide. A propeptide spanning residues 17 to 39 (FTSDRASDDGKAAASDLITLTIK) is cleaved from the precursor. Disulfide bonds link cysteine 41–cysteine 47 and cysteine 42–cysteine 55. Residues 43 to 45 (SRP) are ser-Xaa-Pro motif, crucial for potent interaction with nAChR. 4-hydroxyproline; partial occurs at positions 45 and 46. Cysteine 55 is modified (cysteine amide).

It belongs to the conotoxin A superfamily. Exists in 4 different forms, depending on hydroxylations. Tx1a-PP does not contain hydroxyproline, tx1a-OP has one hydroxyproline at position 45, tx1a-PO has one hydroxyproline at position 46, and tx1a-PP has two hydroxyprolines at positions 45 and 46. As to expression, expressed by the venom duct. Tx1a that containing 1 or 2 non-hydroxylated prolines are mostly present in part 5 of the venom duct (distal part near the pharynx), whereas tx1a-OO (with 2 hydroxyprolines) is mostly present in part 4 of the venom duct (follewed by part 3).

It localises to the secreted. Its function is as follows. Alpha-conotoxins act on postsynaptic membranes, they bind to the nicotinic acetylcholine receptors (nAChR) and thus inhibit them. This toxin inhibits rat alpha-3-beta-2/CHRNA3-CHRNB2 (IC(50)=3.5 nM), rat alpha-7/CHRNA7 (IC(50)=392 nM) nAChR, and the L.stagnalis soluble acetylcholine receptor (all tested without hydroxyproline). This chain is Alpha-conotoxin TxIA, found in Conus textile (Cloth-of-gold cone).